We begin with the raw amino-acid sequence, 515 residues long: 1-pyrroline-5-carboxylate dehydrogenase (515 aa).

Residues glutamate 286 and cysteine 320 contribute to the active site.

This sequence belongs to the aldehyde dehydrogenase family. RocA subfamily.

The catalysed reaction is L-glutamate 5-semialdehyde + NAD(+) + H2O = L-glutamate + NADH + 2 H(+). It participates in amino-acid degradation; L-proline degradation into L-glutamate; L-glutamate from L-proline: step 2/2. This chain is 1-pyrroline-5-carboxylate dehydrogenase, found in Bacillus mycoides (strain KBAB4) (Bacillus weihenstephanensis).